Reading from the N-terminus, the 469-residue chain is Ribulose bisphosphate carboxylase large chain (469 aa).

The residue at position 7 (lysine 7) is an N6,N6,N6-trimethyllysine. The substrate site is built by asparagine 116 and threonine 166. Lysine 168 serves as the catalytic Proton acceptor. Lysine 170 is a substrate binding site. Lysine 194, aspartate 196, and glutamate 197 together coordinate Mg(2+). An N6-carboxylysine modification is found at lysine 194. Histidine 287 serves as the catalytic Proton acceptor. 3 residues coordinate substrate: arginine 288, histidine 320, and serine 372.

It belongs to the RuBisCO large chain family. Type I subfamily. As to quaternary structure, heterohexadecamer of 8 large chains and 8 small chains; disulfide-linked. The disulfide link is formed within the large subunit homodimers. Requires Mg(2+) as cofactor. The disulfide bond which can form in the large chain dimeric partners within the hexadecamer appears to be associated with oxidative stress and protein turnover.

The protein resides in the plastid. The protein localises to the chloroplast. The enzyme catalyses 2 (2R)-3-phosphoglycerate + 2 H(+) = D-ribulose 1,5-bisphosphate + CO2 + H2O. The catalysed reaction is D-ribulose 1,5-bisphosphate + O2 = 2-phosphoglycolate + (2R)-3-phosphoglycerate + 2 H(+). Functionally, ruBisCO catalyzes two reactions: the carboxylation of D-ribulose 1,5-bisphosphate, the primary event in carbon dioxide fixation, as well as the oxidative fragmentation of the pentose substrate in the photorespiration process. Both reactions occur simultaneously and in competition at the same active site. The sequence is that of Ribulose bisphosphate carboxylase large chain from Pachira aquatica (Guiana chestnut).